A 739-amino-acid chain; its full sequence is UPF0313 protein YgiQ (739 aa).

The Radical SAM core domain occupies 372-650 (AYEMIRFSVN…KALLRYHDPA (279 aa)). [4Fe-4S] cluster contacts are provided by Cys-386, Cys-390, and Cys-393. The segment at 686 to 739 (EARRQNRNTRPALTKHTPMATQCQTPATAKKASSTQSRPVNAGAKKRPKAAVGR) is disordered. Polar residues predominate over residues 704-724 (MATQCQTPATAKKASSTQSRP). The span at 729–739 (AKKRPKAAVGR) shows a compositional bias: basic residues.

The protein belongs to the UPF0313 family. Requires [4Fe-4S] cluster as cofactor.

The protein is UPF0313 protein YgiQ of Escherichia coli O157:H7.